The chain runs to 130 residues: Gonadotropin subunit beta-1 (130 aa).

A signal peptide spans 1-18 (MRMHFVVMVMLLPALMMA). 5 cysteine pairs are disulfide-bonded: cysteine 26–cysteine 74, cysteine 40–cysteine 89, cysteine 51–cysteine 105, cysteine 55–cysteine 107, and cysteine 110–cysteine 117. Asparagine 30 carries N-linked (GlcNAc...) asparagine glycosylation.

This sequence belongs to the glycoprotein hormones subunit beta family. In terms of assembly, heterodimer of an alpha and a beta chain.

It localises to the secreted. In terms of biological role, involved in gametogenesis and steroidogenesis. This is Gonadotropin subunit beta-1 (cgba) from Cyprinus carpio (Common carp).